A 64-amino-acid polypeptide reads, in one-letter code: Large ribosomal subunit protein bL35 (64 aa).

The segment at methionine 1–isoleucine 22 is disordered.

It belongs to the bacterial ribosomal protein bL35 family.

The protein is Large ribosomal subunit protein bL35 of Mycobacterium tuberculosis (strain ATCC 25177 / H37Ra).